The primary structure comprises 106 residues: Hydrogenase expression/formation protein HoxL (106 aa).

The protein belongs to the HupF/HypC family.

This Azotobacter vinelandii protein is Hydrogenase expression/formation protein HoxL (hoxL).